We begin with the raw amino-acid sequence, 340 residues long: Nesprin-4 (340 aa).

Disordered stretches follow at residues 1–86 (MAQF…DGGK) and 254–277 (HRRRLQKPQDKKRQGPPSLPDAML). At 1-291 (MAQFPLLGHG…GVPAPASRRP (291 aa)) the chain is on the cytoplasmic side. Residues 53 to 63 (APEHFMDEPKS) are compositionally biased toward basic and acidic residues. Positions 283–340 (VPAPASRRPLTFLLLLLFLLLVGATLLLPLSGVPCCSHTRLARTPYLVLSYVNGLPPI) constitute a KASH domain. Residues 292–312 (LTFLLLLLFLLLVGATLLLPL) traverse the membrane as a helical; Anchor for type IV membrane protein segment. Residues 313–340 (SGVPCCSHTRLARTPYLVLSYVNGLPPI) are Perinuclear space-facing.

This sequence belongs to the nesprin family. As to quaternary structure, core component of LINC complexes which are composed of inner nuclear membrane SUN domain-containing proteins coupled to outer nuclear membrane KASH domain-containing nesprins. SUN and KASH domain-containing proteins seem to bind each other promiscuously; however, differentially expression of LINC complex constituents can give rise to specific assemblies. Probably part of a SUN1-containing LINC complex. Interacts with kinesins KIF5B and KLC1.

Its subcellular location is the nucleus outer membrane. As a component of the LINC (LInker of Nucleoskeleton and Cytoskeleton) complex, involved in the connection between the nuclear lamina and the cytoskeleton. The nucleocytoplasmic interactions established by the LINC complex play an important role in the transmission of mechanical forces across the nuclear envelope and in nuclear movement and positioning. Behaves as a kinesin cargo, providing a functional binding site for kinesin-1 at the nuclear envelope. Hence may contribute to the establishment of secretory epithelial morphology, by promoting kinesin-dependent apical migration of the centrosome and Golgi apparatus and basal localization of the nucleus. This chain is Nesprin-4 (Syne4), found in Rattus norvegicus (Rat).